The chain runs to 389 residues: Probable inactive purple acid phosphatase 29 (389 aa).

An N-terminal signal peptide occupies residues 1–34 (MADNRRRRSLFDFLLFSVFLGLACLCLSPIPATA). Asn-80 carries N-linked (GlcNAc...) asparagine glycosylation. Residue Asn-136 participates in substrate binding. Residue Asn-136 coordinates Zn(2+). N-linked (GlcNAc...) asparagine glycans are attached at residues Asn-191 and Asn-267. A Zn(2+)-binding site is contributed by His-303. 303–305 (HDH) contributes to the substrate binding site. His-305 contributes to the Fe cation binding site. A glycan (N-linked (GlcNAc...) asparagine) is linked at Asn-380.

Belongs to the metallophosphoesterase superfamily. Purple acid phosphatase family. As to quaternary structure, homodimer. Fe cation serves as cofactor. Requires Zn(2+) as cofactor. Expressed in roots, stems, leaves, flowers and siliques.

Its subcellular location is the secreted. In Arabidopsis thaliana (Mouse-ear cress), this protein is Probable inactive purple acid phosphatase 29 (PAP29).